The sequence spans 503 residues: Aromatase (503 aa).

3 helical membrane passes run 19–39, 51–71, and 303–323; these read EVMP…LLVW, GYCM…MGIG, and MLIA…FLIA. The substrate site is built by aspartate 309 and methionine 374. Position 437 (cysteine 437) interacts with heme.

Belongs to the cytochrome P450 family. The cofactor is heme.

The protein localises to the endoplasmic reticulum membrane. It localises to the microsome membrane. The catalysed reaction is testosterone + 3 reduced [NADPH--hemoprotein reductase] + 3 O2 = 17beta-estradiol + formate + 3 oxidized [NADPH--hemoprotein reductase] + 4 H2O + 4 H(+). It carries out the reaction androst-4-ene-3,17-dione + 3 reduced [NADPH--hemoprotein reductase] + 3 O2 = estrone + formate + 3 oxidized [NADPH--hemoprotein reductase] + 4 H2O + 4 H(+). It catalyses the reaction androst-4-ene-3,17-dione + reduced [NADPH--hemoprotein reductase] + O2 = 19-hydroxyandrost-4-ene-3,17-dione + oxidized [NADPH--hemoprotein reductase] + H2O + H(+). The enzyme catalyses 19-hydroxyandrost-4-ene-3,17-dione + reduced [NADPH--hemoprotein reductase] + O2 = 19-oxo-androst-4-ene-3,17-dione + oxidized [NADPH--hemoprotein reductase] + 2 H2O + H(+). The catalysed reaction is 19-oxo-androst-4-ene-3,17-dione + reduced [NADPH--hemoprotein reductase] + O2 = estrone + formate + oxidized [NADPH--hemoprotein reductase] + H2O + 2 H(+). It carries out the reaction estrone + reduced [NADPH--hemoprotein reductase] + O2 = 2-hydroxyestrone + oxidized [NADPH--hemoprotein reductase] + H2O + H(+). It catalyses the reaction 17beta-hydroxy-5alpha-androstan-3-one + reduced [NADPH--hemoprotein reductase] + O2 = 17beta,19-dihydroxy-3-oxo-5alpha-androstanone + oxidized [NADPH--hemoprotein reductase] + H2O + H(+). The enzyme catalyses 17beta,19-dihydroxy-3-oxo-5alpha-androstanone + reduced [NADPH--hemoprotein reductase] + O2 = 17beta-hydroxy-3,19-dioxo-5alpha-androstanone + oxidized [NADPH--hemoprotein reductase] + 2 H2O + H(+). The catalysed reaction is 17beta-hydroxy-3,19-dioxo-5alpha-androstanone + reduced [NADPH--hemoprotein reductase] + O2 = 17beta-hydroxy-3-oxo-19-nor-5alpha-androst-1-ene + formate + oxidized [NADPH--hemoprotein reductase] + H2O + 2 H(+). It functions in the pathway steroid hormone biosynthesis. In terms of biological role, a cytochrome P450 monooxygenase that catalyzes the conversion of C19 androgens, androst-4-ene-3,17-dione (androstenedione) and testosterone to the C18 estrogens, estrone and estradiol, respectively. Catalyzes three successive oxidations of C19 androgens: two conventional oxidations at C19 yielding 19-hydroxy and 19-oxo/19-aldehyde derivatives, followed by a third oxidative aromatization step that involves C1-beta hydrogen abstraction combined with cleavage of the C10-C19 bond to yield a phenolic A ring and formic acid. Alternatively, the third oxidative reaction yields a 19-norsteroid and formic acid. Converts dihydrotestosterone to delta1,10-dehydro 19-nordihydrotestosterone and may play a role in homeostasis of this potent androgen. Also displays 2-hydroxylase activity toward estrone. Mechanistically, uses molecular oxygen inserting one oxygen atom into a substrate, and reducing the second into a water molecule, with two electrons provided by NADPH via cytochrome P450 reductase (CPR; NADPH-ferrihemoprotein reductase). The protein is Aromatase (CYP19A1) of Canis lupus familiaris (Dog).